A 515-amino-acid polypeptide reads, in one-letter code: 2-isopropylmalate synthase (515 aa).

The Pyruvate carboxyltransferase domain occupies 5 to 268 (VIIFDTTLRD…VCGIDASQIV (264 aa)). Mn(2+) is bound by residues D14, H202, H204, and N239. Residues 394–515 (HFISLSQHSE…QAKLNAQMAP (122 aa)) are regulatory domain.

It belongs to the alpha-IPM synthase/homocitrate synthase family. LeuA type 1 subfamily. As to quaternary structure, homodimer. The cofactor is Mn(2+).

The protein resides in the cytoplasm. The catalysed reaction is 3-methyl-2-oxobutanoate + acetyl-CoA + H2O = (2S)-2-isopropylmalate + CoA + H(+). Its pathway is amino-acid biosynthesis; L-leucine biosynthesis; L-leucine from 3-methyl-2-oxobutanoate: step 1/4. Its function is as follows. Catalyzes the condensation of the acetyl group of acetyl-CoA with 3-methyl-2-oxobutanoate (2-ketoisovalerate) to form 3-carboxy-3-hydroxy-4-methylpentanoate (2-isopropylmalate). The chain is 2-isopropylmalate synthase from Polynucleobacter asymbioticus (strain DSM 18221 / CIP 109841 / QLW-P1DMWA-1) (Polynucleobacter necessarius subsp. asymbioticus).